The sequence spans 237 residues: Uridylate kinase (237 aa).

9–12 (KLSG) lines the ATP pocket. Glycine 51 contributes to the UMP binding site. Residues glycine 52 and arginine 56 each contribute to the ATP site. UMP contacts are provided by residues aspartate 71 and 132–139 (CGNPFFTT). The ATP site is built by threonine 159, tyrosine 165, and aspartate 168.

This sequence belongs to the UMP kinase family. As to quaternary structure, homohexamer.

It localises to the cytoplasm. It catalyses the reaction UMP + ATP = UDP + ADP. The protein operates within pyrimidine metabolism; CTP biosynthesis via de novo pathway; UDP from UMP (UMPK route): step 1/1. Inhibited by UTP. Its function is as follows. Catalyzes the reversible phosphorylation of UMP to UDP. This is Uridylate kinase from Prochlorococcus marinus (strain NATL1A).